The sequence spans 487 residues: Lysophospholipid acyltransferase 5 (487 aa).

Residue A2 is modified to N-acetylalanine. The next 6 helical transmembrane spans lie at 44–64 (LIFS…YLFY), 67–87 (SYLI…FNFG), 111–131 (ITAV…GYYY), 178–198 (ILGV…GAFL), 236–256 (LGLV…EDYL), and 285–305 (VTCW…FNGF). N308 carries N-linked (GlcNAc...) asparagine glycosylation. Catalysis depends on residues N338 and H374. Helical transmembrane passes span 364–384 (GLSL…LICF), 422–442 (LVQQ…FCLF), and 453–473 (SIYF…PYVY). Positions 484 to 487 (KKRE) match the Di-lysine motif motif.

It belongs to the membrane-bound acyltransferase family.

The protein localises to the endoplasmic reticulum membrane. The enzyme catalyses a 1-acyl-sn-glycero-3-phosphocholine + an acyl-CoA = a 1,2-diacyl-sn-glycero-3-phosphocholine + CoA. The catalysed reaction is a 1-acyl-sn-glycero-3-phosphoethanolamine + an acyl-CoA = a 1,2-diacyl-sn-glycero-3-phosphoethanolamine + CoA. It carries out the reaction a 1-acyl-sn-glycero-3-phospho-L-serine + an acyl-CoA = a 1,2-diacyl-sn-glycero-3-phospho-L-serine + CoA. It catalyses the reaction (9Z,12Z)-octadecadienoyl-CoA + a 1-acyl-sn-glycero-3-phosphocholine = 1-acyl-2-(9Z,12Z)-octadecadienoyl-sn-glycero-3-phosphocholine + CoA. The enzyme catalyses (5Z,8Z,11Z,14Z)-eicosatetraenoyl-CoA + a 1-acyl-sn-glycero-3-phosphocholine = 1-acyl-2-(5Z,8Z,11Z,14Z-eicosatetraenoyl)-sn-glycero-3-phosphocholine + CoA. The catalysed reaction is dodecanoyl-CoA + 1-hexadecanoyl-sn-glycero-3-phosphocholine = 1-hexadecanoyl-2-dodecanoyl-sn-glycero-3-phosphocholine + CoA. It carries out the reaction octadecanoyl-CoA + 1-hexadecanoyl-sn-glycero-3-phosphocholine = 1-hexadecanoyl-2-octadecanoyl-sn-glycero-3-phosphocholine + CoA. It catalyses the reaction 1-dodecanoyl-sn-glycero-3-phosphocholine + hexadecanoyl-CoA = 1-dodecanoyl-2-hexadecanoyl-sn-glycero-3-phosphocholine + CoA. The enzyme catalyses 1-tetradecanoyl-sn-glycero-3-phosphocholine + hexadecanoyl-CoA = 1-tetradecanoyl-2-hexadecanoyl-sn-glycero-3-phosphocholine + CoA. The catalysed reaction is 1-hexadecanoyl-sn-glycero-3-phosphocholine + hexadecanoyl-CoA = 1,2-dihexadecanoyl-sn-glycero-3-phosphocholine + CoA. It carries out the reaction 1-octadecanoyl-sn-glycero-3-phosphocholine + hexadecanoyl-CoA = 1-octadecanoyl-2-hexadecanoyl-sn-glycero-3-phosphocholine + CoA. It catalyses the reaction 1-(9Z-octadecenoyl)-sn-glycero-3-phosphocholine + hexadecanoyl-CoA = 1-(9Z-octadecenoyl)-2-hexadecanoyl-sn-glycero-3-phosphocholine + CoA. The enzyme catalyses (9Z)-hexadecenoyl-CoA + 1-hexadecanoyl-sn-glycero-3-phosphocholine = 1-hexadecanoyl-2-(9Z-hexadecenoyl)-sn-glycero-3-phosphocholine + CoA. The catalysed reaction is 1-hexadecanoyl-sn-glycero-3-phosphocholine + (9Z)-octadecenoyl-CoA = 1-hexadecanoyl-2-(9Z-octadecenoyl)-sn-glycero-3-phosphocholine + CoA. It carries out the reaction (9Z,12Z)-octadecadienoyl-CoA + 1-hexadecanoyl-sn-glycero-3-phosphocholine = 1-hexadecanoyl-2-(9Z,12Z-octadecadienoyl)-sn-glycero-3-phosphocholine + CoA. It catalyses the reaction 1-dodecanoyl-sn-glycero-3-phosphocholine + (5Z,8Z,11Z,14Z)-eicosatetraenoyl-CoA = 1-dodecanoyl-2-(5Z,8Z,11Z,14Z)-eicosatetraenoyl-sn-glycero-3-phosphocholine + CoA. The enzyme catalyses (5Z,8Z,11Z,14Z)-eicosatetraenoyl-CoA + 1-hexadecanoyl-sn-glycero-3-phosphocholine = 1-hexadecanoyl-2-(5Z,8Z,11Z,14Z-eicosatetraenoyl)-sn-glycero-3-phosphocholine + CoA. The catalysed reaction is 1-octadecanoyl-sn-glycero-3-phosphocholine + (5Z,8Z,11Z,14Z)-eicosatetraenoyl-CoA = 1-octadecanoyl-2-(5Z,8Z,11Z,14Z-eicosatetraenoyl)-sn-glycero-3-phosphocholine + CoA. It carries out the reaction 1-eicosanoyl-sn-glycero-3-phosphocholine + (5Z,8Z,11Z,14Z)-eicosatetraenoyl-CoA = 1-eicosanoyl-2-(5Z,8Z,11Z,14Z)-eicosatetraenoyl-sn-glycero-3-phosphocholine + CoA. It catalyses the reaction 1-(9Z-octadecenoyl)-sn-glycero-3-phosphocholine + (9Z)-octadecenoyl-CoA = 1,2-di-(9Z-octadecenoyl)-sn-glycero-3-phosphocholine + CoA. The enzyme catalyses 1-(9Z-octadecenoyl)-sn-glycero-3-phosphocholine + (9Z,12Z)-octadecadienoyl-CoA = 1-(9Z)-octadecenoyl-2-(9Z,12Z)-octadecadienoyl-sn-glycero-3-phosphocholine + CoA. The catalysed reaction is 1-(9Z-octadecenoyl)-sn-glycero-3-phosphocholine + (5Z,8Z,11Z,14Z)-eicosatetraenoyl-CoA = 1-(9Z)-octadecenoyl-2-(5Z,8Z,11Z,14Z)-icosatetraenoyl-sn-glycero-3-phosphocholine + CoA. It carries out the reaction a 1-acyl-sn-glycero-3-phosphoethanolamine + (9Z,12Z)-octadecadienoyl-CoA = 1-acyl-2-(9Z,12Z)-octadecadienoyl-sn-glycero-3-phosphoethanolamine + CoA. It catalyses the reaction 1-(9Z-octadecenoyl)-sn-glycero-3-phosphoethanolamine + (9Z,12Z)-octadecadienoyl-CoA = 1-(9Z)-octadecenoyl-2-(9Z,12Z)-octadecadienoyl-sn-glycero-3-phosphoethanolamine + CoA. The enzyme catalyses 1-(10Z-heptadecenoyl)-sn-glycero-3-phosphoethanolamine + (9Z,12Z)-octadecadienoyl-CoA = 1-(10Z-heptadecenoyl)-2-(9Z,12Z-octadecadienoyl)-sn-glycero-3-phosphoethanolamine + CoA. The catalysed reaction is a 1-acyl-sn-glycero-3-phosphoethanolamine + (5Z,8Z,11Z,14Z)-eicosatetraenoyl-CoA = 1-acyl-2-(5Z,8Z,11Z,14Z)-eicosatetraenoyl-sn-glycero-3-phosphoethanolamine + CoA. It carries out the reaction 1-hexadecanoyl-sn-glycero-3-phosphoethanolamine + (5Z,8Z,11Z,14Z)-eicosatetraenoyl-CoA = 1-hexadecanoyl-2-(5Z,8Z,11Z,14Z-eicosatetraenoyl)-sn-glycero-3-phosphoethanolamine + CoA. It catalyses the reaction 1-(9Z-octadecenoyl)-sn-glycero-3-phosphoethanolamine + (5Z,8Z,11Z,14Z)-eicosatetraenoyl-CoA = 1-(9Z)-octadecenoyl-2-(5Z,8Z,11Z,14Z)-eicosatetraenoyl-sn-glycero-3-phosphoethanolamine + CoA. The enzyme catalyses 1-(10Z-heptadecenoyl)-sn-glycero-3-phosphoethanolamine + (5Z,8Z,11Z,14Z)-eicosatetraenoyl-CoA = 1-(10Z-heptadecenoyl)-2-(5Z,8Z,11Z,14Z-eicosatetraenoyl)-sn-glycero-3-phosphoethanolamine + CoA. The catalysed reaction is a 1-O-(1Z-alkenyl)-sn-glycero-3-phosphoethanolamine + (5Z,8Z,11Z,14Z)-eicosatetraenoyl-CoA = 1-O-(1Z)-alkenyl-2-(5Z,8Z,11Z,14Z)-eicosatetraenoyl-sn-glycero-3-phosphoethanolamine + CoA. It carries out the reaction a 1-acyl-sn-glycero-3-phospho-L-serine + (9Z,12Z)-octadecadienoyl-CoA = 1-acyl-2-(9Z,12Z-octadecadienoyl)-sn-glycero-3-phospho-L-serine + CoA. It catalyses the reaction a 1-acyl-sn-glycero-3-phospho-L-serine + (5Z,8Z,11Z,14Z)-eicosatetraenoyl-CoA = 1-acyl-2-(5Z,8Z,11Z,14Z-eicosatetraenoyl)-sn-glycero-3-phospho-L-serine + CoA. The enzyme catalyses 1-hexadecanoyl-sn-glycero-3-phospho-L-serine + (9Z)-octadecenoyl-CoA = 1-hexadecanoyl-2-(9Z-octadecenoyl)-sn-glycero-3-phospho-L-serine + CoA. The catalysed reaction is 1-(9Z-octadecenoyl)-sn-glycero-3-phospho-L-serine + (9Z)-octadecenoyl-CoA = 1,2-di-(9Z)-octadecenoyl-sn-glycero-3-phospho-L-serine + CoA. It carries out the reaction 1-hexadecanoyl-sn-glycero-3-phospho-L-serine + (9Z,12Z)-octadecadienoyl-CoA = 1-hexadecanoyl-2-(9Z,12Z-octadecadienoyl)-sn-glycero-3-phospho-L-serine + CoA. It catalyses the reaction 1-(9Z-octadecenoyl)-sn-glycero-3-phospho-L-serine + (9Z,12Z)-octadecadienoyl-CoA = 1-(9Z-octadecenoyl)-2-(9Z,12Z-octadienoyl)-sn-glycero-3-phospho-L-serine + CoA. The enzyme catalyses 1-hexadecanoyl-sn-glycero-3-phospho-L-serine + (5Z,8Z,11Z,14Z)-eicosatetraenoyl-CoA = 1-hexadecanoyl-2-(5Z,8Z,11Z,14Z-eicosatetraenoyl)-sn-glycero-3-phospho-L-serine + CoA. The catalysed reaction is 1-(9Z-octadecenoyl)-sn-glycero-3-phospho-L-serine + (5Z,8Z,11Z,14Z)-eicosatetraenoyl-CoA = 1-(9Z-octadecenoyl)-2-(5Z,8Z,11Z,14Z-eicosatetraenoyl)-sn-glycero-3-phospho-L-serine + CoA. Its pathway is lipid metabolism; phospholipid metabolism. Lysophospholipid O-acyltransferase (LPLAT) that catalyzes the reacylation step of the phospholipid remodeling process also known as the Lands cycle. Catalyzes transfer of the fatty acyl chain from fatty acyl-CoA to 1-acyl lysophospholipid to form various classes of phospholipids. Converts 1-acyl lysophosphatidylcholine (LPC) into phosphatidylcholine (PC) (LPCAT activity), 1-acyl lysophosphatidylserine (LPS) into phosphatidylserine (PS) (LPSAT activity) and 1-acyl lysophosphatidylethanolamine (LPE) into phosphatidylethanolamine (PE) (LPEAT activity). Favors polyunsaturated fatty acyl-CoAs as acyl donors compared to saturated fatty acyl-CoAs. Has higher activity for LPC acyl acceptors compared to LPEs and LPSs. Can also transfer the fatty acyl chain from fatty acyl-CoA to 1-O-alkyl lysophospholipid or 1-O-alkenyl lysophospholipid with lower efficiency. Acts as a major LPC O-acyltransferase in liver and intestine. As a component of the liver X receptor/NR1H3 or NR1H2 signaling pathway, mainly catalyzes the incorporation of arachidonate into PCs of endoplasmic reticulum (ER) membranes, increasing membrane dynamics and enabling triacylglycerols transfer to nascent very low-density lipoprotein (VLDL) particles. Promotes processing of sterol regulatory protein SREBF1 in hepatocytes, likely by facilitating the translocation of SREBF1-SCAP complex from ER to the Golgi apparatus. Participates in mechanisms by which the liver X receptor/NR1H3 or NR1H2 signaling pathway counteracts lipid-induced ER stress response and inflammation. Down-regulates hepatic inflammation by limiting arachidonic acid availability for synthesis of inflammatory eicosanoids, such as prostaglandins. In enterocytes, acts as a component of a gut-brain feedback loop that coordinates dietary lipid absorption and food intake. Regulates the abundance of PCs containing linoleate and arachidonate in enterocyte membranes, enabling passive diffusion of fatty acids and cholesterol across the membrane for efficient chylomicron assembly. In the intestinal crypt, acts as a component of dietary-responsive phospholipid-cholesterol axis, regulating the biosynthesis of cholesterol and its mitogenic effects on intestinal stem cells. The polypeptide is Lysophospholipid acyltransferase 5 (Lpcat3) (Rattus norvegicus (Rat)).